Here is a 435-residue protein sequence, read N- to C-terminus: RuBisCO large subunit-binding protein subunit beta-1 (435 aa).

It belongs to the chaperonin (HSP60) family. As to quaternary structure, oligomer of probably six alpha and six beta subunits.

It localises to the plastid. It is found in the chloroplast. Its function is as follows. This protein binds RuBisCO small and large subunits and is implicated in the assembly of the enzyme oligomer. The polypeptide is RuBisCO large subunit-binding protein subunit beta-1 (Chlamydomonas reinhardtii (Chlamydomonas smithii)).